A 344-amino-acid polypeptide reads, in one-letter code: Hydrophobic dipeptide epimerase (344 aa).

Residues threonine 126 and 151 to 153 (KIK) each bind substrate. 3 residues coordinate Mg(2+): aspartate 184, glutamate 210, and aspartate 235. Substrate contacts are provided by residues lysine 257 and 307-309 (DLD).

The protein belongs to the mandelate racemase/muconate lactonizing enzyme family. The cofactor is Mg(2+).

Dipeptide epimerase with a preference for hydrophobic substrates. Catalyzes the epimerization of L-Ala-L-Thr, L-Ala-L-Met, L-Ala-L-His, L-Ala-L-Phe, L-Ala-L-Tyr, L-Ala-L-Trp, L-Ile-L-Ala, L-Ile-L-Ser, L-Ile-L-Met, L-Ile-L-His, L-Ile-L-Phe, L-Ile-L-Tyr, L-Ile-L-Trp, L-Phe-L-Met, L-Phe-L-His, L-Phe-L-Phe, L-Phe-L-Tyr, L-Phe-L-Trp, L-Phe-L-Ser, L-Phe-L-Thr and L-Phe-L-Lys (in vitro). This Roseobacter litoralis (strain ATCC 49566 / DSM 6996 / JCM 21268 / NBRC 15278 / OCh 149) protein is Hydrophobic dipeptide epimerase.